Here is a 177-residue protein sequence, read N- to C-terminus: Large ribosomal subunit protein uL6 (177 aa).

Belongs to the universal ribosomal protein uL6 family. As to quaternary structure, part of the 50S ribosomal subunit.

Its function is as follows. This protein binds to the 23S rRNA, and is important in its secondary structure. It is located near the subunit interface in the base of the L7/L12 stalk, and near the tRNA binding site of the peptidyltransferase center. The sequence is that of Large ribosomal subunit protein uL6 from Chelativorans sp. (strain BNC1).